The following is a 177-amino-acid chain: O-acetyl-ADP-ribose deacetylase (177 aa).

Residues 1-175 form the Macro domain; sequence MKTRIHVVQG…LYERLLTQQG (175 aa). Substrate-binding positions include 11-12, asparagine 25, 33-35, and 122-126; these read DI, GVD, and STGVY. The Proton acceptor role is filled by aspartate 35.

It belongs to the MacroD-type family. YmdB subfamily. As to quaternary structure, homodimer. Interacts with RNase III.

It catalyses the reaction 3''-O-acetyl-ADP-D-ribose + H2O = ADP-D-ribose + acetate + H(+). The enzyme catalyses 2''-O-acetyl-ADP-D-ribose + H2O = ADP-D-ribose + acetate + H(+). Its function is as follows. Deacetylates O-acetyl-ADP ribose to yield ADP-ribose and free acetate. Down-regulates ribonuclease 3 (RNase III) activity. Acts by interacting directly with the region of the ribonuclease that is required for dimerization/activation. The chain is O-acetyl-ADP-ribose deacetylase from Escherichia coli O157:H7.